We begin with the raw amino-acid sequence, 269 residues long: 3-methyl-2-oxobutanoate hydroxymethyltransferase (269 aa).

The Mg(2+) site is built by aspartate 48 and aspartate 87. Residues 48–49 (DS), aspartate 87, and lysine 116 contribute to the 3-methyl-2-oxobutanoate site. Glutamate 118 serves as a coordination point for Mg(2+). Glutamate 185 acts as the Proton acceptor in catalysis.

It belongs to the PanB family. In terms of assembly, homodecamer; pentamer of dimers. Mg(2+) is required as a cofactor.

The protein localises to the cytoplasm. The catalysed reaction is 3-methyl-2-oxobutanoate + (6R)-5,10-methylene-5,6,7,8-tetrahydrofolate + H2O = 2-dehydropantoate + (6S)-5,6,7,8-tetrahydrofolate. It functions in the pathway cofactor biosynthesis; (R)-pantothenate biosynthesis; (R)-pantoate from 3-methyl-2-oxobutanoate: step 1/2. Its function is as follows. Catalyzes the reversible reaction in which hydroxymethyl group from 5,10-methylenetetrahydrofolate is transferred onto alpha-ketoisovalerate to form ketopantoate. The polypeptide is 3-methyl-2-oxobutanoate hydroxymethyltransferase (Campylobacter curvus (strain 525.92)).